The following is a 1062-amino-acid chain: Zinc finger protein swm (1062 aa).

The PWI domain maps to 7-75 (DKLKDWLSVV…ERLFDAIASE (69 aa)). Disordered regions lie at residues 119–145 (ADSPPPPPKDNVIKPDSNQVKLEQASQ) and 171–340 (KPAF…PDRV). Residues 134–145 (DSNQVKLEQASQ) show a composition bias toward polar residues. The segment covering 172-182 (PAFDHKTKDSH) has biased composition (basic and acidic residues). Positions 197 to 207 (SASPPGRSSGV) are enriched in low complexity. The segment covering 208–220 (SGSGGGGPGGAGL) has biased composition (gly residues). Residues 234-249 (SRRRRASLRSRSRSRS) show a composition bias toward basic residues. 2 stretches are compositionally biased toward basic and acidic residues: residues 264 to 273 (RRVNEREKTQ) and 294 to 310 (RNFDRRRIGGNADDRPR). Over residues 322-340 (RSMSPERNARRNQNSPDRV) the composition is skewed to polar residues. The segment at 363–391 (SHPRQRCRDFDEKGYCVRGETCPWDHGVN) adopts a C3H1-type zinc-finger fold. The interval 416–463 (EIWARSGGPPPGAGQGPVPPPTQPGQTTINPFSGNVRPTTLMSGSGPS) is disordered. Pro residues predominate over residues 423-438 (GPPPGAGQGPVPPPTQ). Residues 444–461 (INPFSGNVRPTTLMSGSG) are compositionally biased toward polar residues. In terms of domain architecture, RRM spans 561-635 (SSLELRKVPR…RFIKVFWHND (75 aa)). Disordered stretches follow at residues 666–704 (NVPAVPTPNADGAKISNANPLTEAGAGNIGTPATEQANT), 716–741 (TTTAGGSAGGAAGAGAPGSGRPLNPA), 822–847 (QDQLQAQMQQQQQQQQPPVKKTKEQQ), 886–920 (SAANNKSTHYAPASGAPGGGAGRKRPNLPEGPTRV), and 1004–1062 (APVE…SWRR). Residues 721–733 (GSAGGAAGAGAPG) are compositionally biased toward gly residues. Residues 823–840 (DQLQAQMQQQQQQQQPPV) are compositionally biased toward low complexity. Polar residues predominate over residues 1018–1037 (SLENPKQLIQSVSESESLLG). Positions 1046 to 1056 (LEDEEEDEESE) are enriched in acidic residues.

It is found in the nucleus. In terms of biological role, negatively regulates Hedgehog (hh) protein signal in wing development. Regulates neural-specific glycosylation by binding to FucTA mRNA and facilitating its nuclear export in neural cells. The protein is Zinc finger protein swm of Drosophila melanogaster (Fruit fly).